The following is a 185-amino-acid chain: Peptidoglycan-recognition protein SC1a/b (185 aa).

An N-terminal signal peptide occupies residues 1-21; sequence MVSKVALLLAVLVCSQYMAQG. The region spanning 46 to 170 is the N-acetylmuramoyl-L-alanine amidase domain; sequence SYAIIHHTAG…RQVSATECPG (125 aa). Position 51 (His51) interacts with Zn(2+). An intrachain disulfide couples Cys58 to Cys64. Residues His160 and Cys168 each contribute to the Zn(2+) site.

It belongs to the N-acetylmuramoyl-L-alanine amidase 2 family. The cofactor is Zn(2+).

The protein localises to the secreted. It carries out the reaction Hydrolyzes the link between N-acetylmuramoyl residues and L-amino acid residues in certain cell-wall glycopeptides.. N-acetylmuramyl-L-alanine amidase involved in innate immunity by degrading bacterial peptidoglycans (PGN). Plays a scavenger role by digesting biologically active PGN into biologically inactive fragments. Has no direct bacteriolytic activity. This Drosophila simulans (Fruit fly) protein is Peptidoglycan-recognition protein SC1a/b (PGRP-SC1a).